Here is a 34-residue protein sequence, read N- to C-terminus: Photosystem II reaction center protein Y (34 aa).

The Lumenal portion of the chain corresponds to 1-5 (DWRVL). Residues 6–22 (VVLLPVLLAAGWAVRNI) traverse the membrane as a helical segment. Topologically, residues 23-34 (LPYAVKQVQKLL) are cytoplasmic.

Belongs to the PsbY family. As to quaternary structure, PSII is composed of 1 copy each of membrane proteins PsbA, PsbB, PsbC, PsbD, PsbE, PsbF, PsbH, PsbI, PsbJ, PsbK, PsbL, PsbM, PsbT, PsbX, PsbY, PsbZ, Psb30/Ycf12, peripheral proteins PsbO, CyanoQ (PsbQ), PsbU, PsbV and a large number of cofactors. It forms dimeric complexes. This protein is only loosely associated with PSII, and is not often found in crystals. PSII binds multiple chlorophylls, carotenoids and specific lipids. serves as cofactor.

It is found in the cellular thylakoid membrane. Loosely associated component of the core of photosystem II (PSII). PSII is a light-driven water plastoquinone oxidoreductase, using light energy to abstract electrons from H(2)O, generating a proton gradient subsequently used for ATP formation. This chain is Photosystem II reaction center protein Y, found in Thermostichus vulcanus (Synechococcus vulcanus).